The following is a 163-amino-acid chain: Transcription antitermination protein NusB (163 aa).

The disordered stretch occupies residues 1 to 21; it reads MTTFLSDSEHPQDVKAPPKSA.

The protein belongs to the NusB family.

In terms of biological role, involved in transcription antitermination. Required for transcription of ribosomal RNA (rRNA) genes. Binds specifically to the boxA antiterminator sequence of the ribosomal RNA (rrn) operons. The polypeptide is Transcription antitermination protein NusB (Dechloromonas aromatica (strain RCB)).